The sequence spans 400 residues: Argininosuccinate synthase (400 aa).

ATP is bound at residue 10–18 (AYSGGVDTS). Residue Tyr89 coordinates L-citrulline. Position 119 (Gly119) interacts with ATP. L-aspartate is bound by residues Thr121, Asn125, and Asp126. Residue Asn125 coordinates L-citrulline. 5 residues coordinate L-citrulline: Arg129, Ser177, Ser186, Glu262, and Tyr274.

Belongs to the argininosuccinate synthase family. Type 1 subfamily. Homotetramer.

Its subcellular location is the cytoplasm. It carries out the reaction L-citrulline + L-aspartate + ATP = 2-(N(omega)-L-arginino)succinate + AMP + diphosphate + H(+). The protein operates within amino-acid biosynthesis; L-arginine biosynthesis; L-arginine from L-ornithine and carbamoyl phosphate: step 2/3. This chain is Argininosuccinate synthase, found in Synechococcus sp. (strain JA-2-3B'a(2-13)) (Cyanobacteria bacterium Yellowstone B-Prime).